The chain runs to 402 residues: C2H2 finger domain transcription factor CON7 (402 aa).

The disordered stretch occupies residues 1–247 (MLASSRQPRH…GAQQHKRPRR (247 aa)). 2 stretches are compositionally biased toward polar residues: residues 19–49 (LSSS…TSVG) and 72–86 (CGDN…TVDT). A compositionally biased stretch (low complexity) spans 87 to 98 (SSAAQYNASAQQ). 2 stretches are compositionally biased toward polar residues: residues 99–116 (EVRS…TPTS) and 125–151 (ARSS…SSGD). The segment at 256 to 282 (YKCGWQGCEKAYGTLNHLNAHVTMQSH) adopts a C2H2-type zinc-finger fold. A coiled-coil region spans residues 289 to 323 (EEFKEIRKEWKARKKEEEAARKADEERQRQAAQSQ). The span at 302 to 317 (KKEEEAARKADEERQR) shows a compositional bias: basic and acidic residues. Residues 302 to 402 (KKEEEAARKA…GSNQAMYNQR (101 aa)) form a disordered region. Composition is skewed to polar residues over residues 322 to 341 (SQGG…SSNG), 363 to 373 (AATSTSVQQQP), and 392 to 402 (GGSNQAMYNQR).

It localises to the nucleus. In terms of biological role, transcription factor that plays a central role in appressorium formation and pathogenicity. Required for the expression of a large set of genes including factors that might play a role in membrane metabolism and ergosterol biosynthesis, the chitin-binding protein CBP1,as well as CHS7 that is essential for normal pathogenic development. The chain is C2H2 finger domain transcription factor CON7 from Pyricularia oryzae (strain 70-15 / ATCC MYA-4617 / FGSC 8958) (Rice blast fungus).